Here is a 168-residue protein sequence, read N- to C-terminus: uncharacterized protein (168 aa).

3 disordered regions span residues 37-74 (GGSK…SQFT), 81-100 (QYNY…PNYY), and 117-168 (MQPF…EETN). Polar residues-rich tracts occupy residues 52-74 (HSGQ…SQFT) and 82-95 (YNYN…TRSV). Low complexity predominate over residues 120–129 (FNNQSFNNQS). A compositionally biased stretch (polar residues) spans 130-158 (RTHQSKTYQHNQQKRSFNGPRNNGPQNNV).

This is an uncharacterized protein from Acanthamoeba polyphaga (Amoeba).